We begin with the raw amino-acid sequence, 398 residues long: Lymphocyte transmembrane adapter 1 (398 aa).

The Extracellular segment spans residues 1 to 37 (MDGVTPTLSTIRGRTLESSTLHVTPRSLDRNKDQITN). A helical; Signal-anchor for type III membrane protein membrane pass occupies residues 38 to 58 (IFSGFAGLLAILLVVAVFCIL). At 59-398 (WNWNKRKKRQ…GPGTQLLPDE (340 aa)) the chain is on the cytoplasmic side. Tyr193 is modified (phosphotyrosine). A disordered region spans residues 228 to 261 (TEERDEGCGDAGDCTSLYSPGAEDSDSLSNGEGS). Residues Tyr268 and Tyr294 each carry the phosphotyrosine modification. Positions 298 to 330 (PAADPSGSQQQAEKDVPSSNIGHVEDKTDDPGT) are disordered. Over residues 303–318 (SGSQQQAEKDVPSSNI) the composition is skewed to polar residues. Residues 320 to 329 (HVEDKTDDPG) show a composition bias toward basic and acidic residues. Residues Tyr345 and Tyr373 each carry the phosphotyrosine modification. Positions 347–398 (DFQPFTQSEDSQMKHREEMSNEDSSDYENVLTAKLGGRDSEQGPGTQLLPDE) are disordered.

When phosphorylated, interacts with GRB2, PIK3R1 and GRAP2. In terms of processing, phosphorylated on tyrosines by Syk, Lck or ZAP70 upon TCR or BCR activation; which leads to the recruitment of GRB2, PIK3R1 and GRAP2. In terms of tissue distribution, expressed in spleen, thymus, and peripheral blood leukocytes. Expressed in several B-, T-, NK and monocyte cell lines.

The protein localises to the cell membrane. Its function is as follows. Negatively regulates TCR (T-cell antigen receptor)-mediated signaling in T-cells and BCR (B-cell antigen receptor)-mediated signaling in B-cells. This chain is Lymphocyte transmembrane adapter 1 (LAX1), found in Homo sapiens (Human).